Reading from the N-terminus, the 678-residue chain is Pescadillo homolog (678 aa).

The segment covering 283 to 303 (EEEEPEEVDSEAGDEDDDDLP) has biased composition (acidic residues). The disordered stretch occupies residues 283-316 (EEEEPEEVDSEAGDEDDDDLPVLDSGTRRRRAAA). The BRCT domain maps to 361-451 (VCGSLFRGRV…VLMPTDLYAP (91 aa)). The stretch at 552 to 587 (MTRKARKMYNNMKQKEAAKQERVQQLESKKAKLAAT) forms a coiled coil. The interval 563–678 (MKQKEAAKQE…DAAPAKRQRR (116 aa)) is disordered. Over residues 564 to 581 (KQKEAAKQERVQQLESKK) the composition is skewed to basic and acidic residues. Composition is skewed to low complexity over residues 597–618 (KPAAAGKAAAAKAAAPAKVAAS) and 630–661 (APAPAKGKGTPAAKGKEAPAPAKGKGAAAAKE). The span at 662-672 (APAKGGKDAAP) shows a compositional bias: basic and acidic residues.

The protein belongs to the pescadillo family.

It is found in the nucleus. The protein resides in the nucleolus. It localises to the nucleoplasm. Functionally, required for maturation of ribosomal RNAs and formation of the large ribosomal subunit. This is Pescadillo homolog from Chlamydomonas reinhardtii (Chlamydomonas smithii).